Here is a 266-residue protein sequence, read N- to C-terminus: Type 1 encapsulin shell protein (266 aa).

The protein belongs to the encapsulin family. Family 1 subfamily. Homomultimeric. This encapsulin nanocompartment is formed by 60 subunits, and encloses one Dyp homohexamer; partially assembled 58-subunit compartments with and without cargo are also purified. May assemble the shell from dimers. Monomers form pentamers, which assemble to form hollow shells with pores 5-8 Angstroms in diameter where 3 pentamers meet.

The protein resides in the encapsulin nanocompartment. Shell component of a type 1 encapsulin nanocompartment. Assembles into proteinaceous shells 23-24 nm in diameter with 2-2.5 nm thick walls. Endogenous cargo protein DyP (dye-decolorizing peroxidase) is targeted to the interior via its C-terminal extension; only 1 DyP hexamer is incorporated into each shell. Empty shells can be isolated in the absence of cargo. Cargo encapsulation probably precedes assembly of the nanocompartment; may assemble or disassemble via dimers, subcomplexes with a distinct preference for even numbers of subunits are detected. Nanocompartments are stable against mechanical forces; loaded nanocompartments are less stable than empty ones. Nanocompartments are stable between pH 5-10; they aggregate at pH 9-10 and start to disassemble at pH 11. They are stable in 1M NaCl, 1 M MgCl(2) and 1M CaCl(2), unstable in 20% DMSO (dimethylsulfoxide) and are stable in 20% but not 40% ethanol. The polypeptide is Type 1 encapsulin shell protein (Brevibacterium linens).